Reading from the N-terminus, the 137-residue chain is Small ribosomal subunit protein uS19 (137 aa).

The protein belongs to the universal ribosomal protein uS19 family.

Protein S19 forms a complex with S13 that binds strongly to the 16S ribosomal RNA. This Methanospirillum hungatei JF-1 (strain ATCC 27890 / DSM 864 / NBRC 100397 / JF-1) protein is Small ribosomal subunit protein uS19.